The chain runs to 372 residues: Cyclic GMP-AMP synthase-like receptor (372 aa).

Residue threonine 68 participates in GTP binding. ATP is bound by residues serine 70 and 82 to 84 (EFD). The Mg(2+) site is built by glutamate 82, aspartate 84, and aspartate 190. Residues aspartate 190 and 236-243 (LVCAPYWE) each bind GTP. Residues 240–243 (PYWE), lysine 261, and 274–278 (SYTIK) each bind ATP.

The protein belongs to the mab-21 family. Mg(2+) is required as a cofactor. Requires Mn(2+) as cofactor.

The catalysed reaction is GTP + ATP = 3',2'-cGAMP + 2 diphosphate. It catalyses the reaction GTP + ATP = pppA(2'-5')pG + diphosphate. The enzyme catalyses pppA(2'-5')pG = 3',2'-cGAMP + diphosphate. Its activity is regulated as follows. The enzyme activity is specifically activated by double-stranded RNA (dsRNA). Nucleotidyltransferase that catalyzes the formation of cyclic GMP-AMP (3',2'-cGAMP) from ATP and GTP and plays a key role in innate immunity. Synthesizes 3',2'-cGAMP in a two-step reaction through production of the linear intermediate pppA(2'-5')pG. Acts as a key sensor of double-stranded RNA (dsRNA), the presence of dsRNA in the cytoplasm being a danger signal that triggers the immune responses. Directly binds dsRNA longer than 15 bp, activating the nucleotidyltransferase activity, leading to synthesis of 3',2'-cGAMP, a second messenger that binds to and activates Sting, thereby triggering the antiviral immune response via activation of the NF-kappa-B transcription factor Rel (Relish). In Drosophila eugracilis (Fruit fly), this protein is Cyclic GMP-AMP synthase-like receptor.